Reading from the N-terminus, the 456-residue chain is ATP-dependent protease ATPase subunit HslU (456 aa).

Residues Val-18, 60–65, Asp-269, Glu-334, and Arg-406 contribute to the ATP site; that span reads GVGKTE.

It belongs to the ClpX chaperone family. HslU subfamily. As to quaternary structure, a double ring-shaped homohexamer of HslV is capped on each side by a ring-shaped HslU homohexamer. The assembly of the HslU/HslV complex is dependent on binding of ATP.

It localises to the cytoplasm. ATPase subunit of a proteasome-like degradation complex; this subunit has chaperone activity. The binding of ATP and its subsequent hydrolysis by HslU are essential for unfolding of protein substrates subsequently hydrolyzed by HslV. HslU recognizes the N-terminal part of its protein substrates and unfolds these before they are guided to HslV for hydrolysis. In Desulfosudis oleivorans (strain DSM 6200 / JCM 39069 / Hxd3) (Desulfococcus oleovorans), this protein is ATP-dependent protease ATPase subunit HslU.